The chain runs to 132 residues: Small ribosomal subunit protein uS8 (132 aa).

This sequence belongs to the universal ribosomal protein uS8 family. In terms of assembly, part of the 30S ribosomal subunit. Contacts proteins S5 and S12.

Its function is as follows. One of the primary rRNA binding proteins, it binds directly to 16S rRNA central domain where it helps coordinate assembly of the platform of the 30S subunit. This chain is Small ribosomal subunit protein uS8, found in Mycobacterium sp. (strain KMS).